The following is a 687-amino-acid chain: Protein Smaug homolog 2 (687 aa).

A compositionally biased stretch (basic and acidic residues) spans 160-172 (TRPEPSYHSRQGS). The disordered stretch occupies residues 160-301 (TRPEPSYHSR…NTFQEDGSGM (142 aa)). Serine 172 carries the phosphoserine modification. 2 stretches are compositionally biased toward low complexity: residues 175–190 (WGGP…GPGW) and 200–211 (HVPFHPSSSVPP). Polar residues predominate over residues 215–224 (SIGSNANTGL). Phosphoserine is present on residues serine 271, serine 278, serine 279, and serine 281. Residues 278–290 (SSGSEQTEEQGSS) are compositionally biased toward low complexity. The 74-residue stretch at 299–372 (SGMKDVPSWL…LKSLEKDVLE (74 aa)) folds into the SAM domain. The residue at position 400 (threonine 400) is a Phosphothreonine. The interval 402–464 (TAKDEGRGEP…APAPVADGDI (63 aa)) is disordered. Over residues 424–435 (GSDKGTEAKDPP) the composition is skewed to basic and acidic residues. The span at 448–461 (PSDSSEPAPAPVAD) shows a compositional bias: low complexity. Residues serine 548, serine 550, serine 556, serine 585, and serine 593 each carry the phosphoserine modification. An Asymmetric dimethylarginine modification is found at arginine 595. The disordered stretch occupies residues 600–636 (SPSLGGQGRQNLWFANPGGSNSMPSQSRSSVQRTHSL). Residues 617–636 (GGSNSMPSQSRSSVQRTHSL) are compositionally biased toward polar residues. Residue serine 621 is modified to Phosphoserine.

Belongs to the SMAUG family.

Its subcellular location is the cytoplasm. The protein localises to the nucleus. Has transcriptional repressor activity. Overexpression inhibits the transcriptional activities of AP-1, p53/TP53 and CDKN1A. This Mus musculus (Mouse) protein is Protein Smaug homolog 2 (Samd4b).